The chain runs to 390 residues: Ankyrin repeat domain-containing protein 63 (390 aa).

ANK repeat units lie at residues 11–40, 46–79, 83–112, 116–145, and 153–182; these read AGTRTFLEAMQAGKVHLARFVLDALDRSII, QGRTPLMVAVGLPDPAMRSRFVRLLLEQGAAVNL, RGRTALSLACERGHLDAVQLLVQFSGDPEA, AGNSPVMWAAACGHGAVLEFLVRSFRRLGL, and AGLTALQLAASRGHGTCVQALTGPWGRAAA. 2 disordered regions span residues 181–213 and 226–245; these read AAAAAARGSNSDSPPGHPAPAPSPERRRPSPRR and AGGHGHGHGHGHGHGGELAS. Ser-193 carries the phosphoserine modification. Ser-304 bears the Phosphoserine mark. Residues 320–377 are disordered; the sequence is VGLSPHPEGCPGSGRLGLRRRSTAPDIPSLVGEASGPESGPELENNALPFSVPGPKPW.

The polypeptide is Ankyrin repeat domain-containing protein 63 (Mus musculus (Mouse)).